Reading from the N-terminus, the 217-residue chain is Octanoyltransferase (217 aa).

Positions 32 to 207 (SESHDELWIV…TFSQLLGYQH (176 aa)) constitute a BPL/LPL catalytic domain. Residues 71–78 (RGGQVTYH), 138–140 (SLG), and 151–153 (GLA) contribute to the substrate site. Residue Cys-169 is the Acyl-thioester intermediate of the active site.

The protein belongs to the LipB family.

It is found in the cytoplasm. It catalyses the reaction octanoyl-[ACP] + L-lysyl-[protein] = N(6)-octanoyl-L-lysyl-[protein] + holo-[ACP] + H(+). Its pathway is protein modification; protein lipoylation via endogenous pathway; protein N(6)-(lipoyl)lysine from octanoyl-[acyl-carrier-protein]: step 1/2. Catalyzes the transfer of endogenously produced octanoic acid from octanoyl-acyl-carrier-protein onto the lipoyl domains of lipoate-dependent enzymes. Lipoyl-ACP can also act as a substrate although octanoyl-ACP is likely to be the physiological substrate. The protein is Octanoyltransferase of Shewanella baltica (strain OS155 / ATCC BAA-1091).